A 322-amino-acid chain; its full sequence is Mitochondrial uncoupling protein 4 (322 aa).

3 Solcar repeats span residues 20 to 114 (SKFL…LREV), 124 to 216 (YPLW…VKHY), and 225 to 316 (DNIS…IREM). A run of 6 helical transmembrane segments spans residues 22–39 (FLLS…TFPL), 87–108 (WQGV…MVTY), 126–143 (LWKS…GQFL), 194–211 (PNIQ…TTYD), 228–247 (STHG…LGTP), and 287–310 (SLYK…WLTY).

It belongs to the mitochondrial carrier (TC 2.A.29) family. In terms of assembly, homotetramer.

It is found in the mitochondrion inner membrane. The protein localises to the cell projection. The protein resides in the neuron projection. It carries out the reaction H(+)(in) = H(+)(out). It catalyses the reaction chloride(in) = chloride(out). Its function is as follows. Facilitates proton transport across the inner mitochondrial membrane and may dissipate excessive proton gradient associated with oxidative and metabolic stress at neuronal synapses. Regulates glutamate-induced proton conductance in astrocytes, shifting the energy metabolism toward aerobic glycolysis and lactate transfer to neurons for ATP synthesis. Can transport chloride ions with lower efficiency. The transport mechanism remains to be elucidated. The protein is Mitochondrial uncoupling protein 4 of Mus musculus (Mouse).